Reading from the N-terminus, the 424-residue chain is Histidine--tRNA ligase (424 aa).

This sequence belongs to the class-II aminoacyl-tRNA synthetase family. As to quaternary structure, homodimer.

It is found in the cytoplasm. The enzyme catalyses tRNA(His) + L-histidine + ATP = L-histidyl-tRNA(His) + AMP + diphosphate + H(+). In Sodalis glossinidius (strain morsitans), this protein is Histidine--tRNA ligase.